We begin with the raw amino-acid sequence, 503 residues long: Glucose-6-phosphate 1-dehydrogenase (503 aa).

Residues 14-21 (GASGDLSK), R49, and K158 each bind NADP(+). Residues K158, 188 to 192 (HYLGK), E226, and D245 contribute to the D-glucose 6-phosphate site. The Proton acceptor role is filled by H250. NADP(+) is bound at residue K341. K344 is a D-glucose 6-phosphate binding site. 3 residues coordinate NADP(+): K350, R354, and R376. Q378 contacts D-glucose 6-phosphate. Residues 384–386 (YLK), R471, and Y487 contribute to the NADP(+) site.

Belongs to the glucose-6-phosphate dehydrogenase family.

The catalysed reaction is D-glucose 6-phosphate + NADP(+) = 6-phospho-D-glucono-1,5-lactone + NADPH + H(+). It participates in carbohydrate degradation; pentose phosphate pathway; D-ribulose 5-phosphate from D-glucose 6-phosphate (oxidative stage): step 1/3. Functionally, catalyzes the rate-limiting step of the oxidative pentose-phosphate pathway, which represents a route for the dissimilation of carbohydrates besides glycolysis. The main function of this enzyme is to provide reducing power (NADPH) and pentose phosphates for fatty acid and nucleic acid synthesis. The G6PDH activity is required to cope with hydrogen peroxide and potassium bisulfite stresses and plays a role in adaptation to conditions used in wine fermentations. The sequence is that of Glucose-6-phosphate 1-dehydrogenase from Hanseniaspora uvarum (Yeast).